Reading from the N-terminus, the 71-residue chain is uncharacterized protein (71 aa).

A helical transmembrane segment spans residues 24–44 (FGGGGLSTAIYSIFAFFSIPL).

It localises to the membrane. This is an uncharacterized protein from Schizosaccharomyces pombe (strain 972 / ATCC 24843) (Fission yeast).